We begin with the raw amino-acid sequence, 148 residues long: Large ribosomal subunit protein uL13 (148 aa).

Belongs to the universal ribosomal protein uL13 family. In terms of assembly, part of the 50S ribosomal subunit.

In terms of biological role, this protein is one of the early assembly proteins of the 50S ribosomal subunit, although it is not seen to bind rRNA by itself. It is important during the early stages of 50S assembly. The chain is Large ribosomal subunit protein uL13 from Lacticaseibacillus casei (strain BL23) (Lactobacillus casei).